Here is an 830-residue protein sequence, read N- to C-terminus: uncharacterized protein (830 aa).

The span at 1 to 12 (MEKASKNKESGV) shows a compositional bias: basic and acidic residues. The segment at 1–61 (MEKASKNKES…SIKSKNKKKT (61 aa)) is disordered. Positions 15–25 (ANNSFLQNFGV) are enriched in polar residues. Residues 249-433 (TVSKSSASGG…YSLVKFLHIN (185 aa)) form the Helicase ATP-binding domain. 262-269 (DDMGLGKT) contacts ATP. A DEAH box motif is present at residues 384–387 (DEAH). A Helicase C-terminal domain is found at 662 to 816 (EEDDTVRGLR…KSVFTSKKLT (155 aa)). S712 is subject to Phosphoserine.

This sequence belongs to the SNF2/RAD54 helicase family.

Its subcellular location is the nucleus. This is an uncharacterized protein from Schizosaccharomyces pombe (strain 972 / ATCC 24843) (Fission yeast).